Reading from the N-terminus, the 96-residue chain is Small ribosomal subunit protein bS6 (96 aa).

Belongs to the bacterial ribosomal protein bS6 family.

Its function is as follows. Binds together with bS18 to 16S ribosomal RNA. This is Small ribosomal subunit protein bS6 from Mycobacteroides abscessus (strain ATCC 19977 / DSM 44196 / CCUG 20993 / CIP 104536 / JCM 13569 / NCTC 13031 / TMC 1543 / L948) (Mycobacterium abscessus).